Consider the following 253-residue polypeptide: Sortase SrtE2 (253 aa).

Basic and acidic residues predominate over residues methionine 1–glutamate 11. The segment at methionine 1–proline 23 is disordered. A helical transmembrane segment spans residues alanine 30–valine 50. The interval glutamate 69–glycine 89 is disordered. Cysteine 220 is a catalytic residue.

It belongs to the bacterial sortase family. Class E subfamily.

It localises to the cell membrane. The catalysed reaction is The enzyme catalyzes a cell wall sorting reaction in which a surface protein with a sorting signal containing a LPXTG motif is cleaved between the Thr and Gly residue. The resulting threonine carboxyl end of the protein is covalently attached to a pentaglycine cross-bridge of peptidoglycan.. Transpeptidase that anchors surface proteins to the cell wall. Recognizes Leu-Ala-x-Thr-Gly and Leu-Pro-x-Thr-Gly, with a preference for the former. Unlike the S.aureus sortase it cleaves not only the Thr-Gly motif but also the Ala-X bond; an Ala-Glu bond is a better substrate than the Thr-Gly motif in vitro. Among its possible substrates are the chaplins ChpA, ChpB and ChpC; this enzyme is more important for ChpC attachment than is SrtE1. A double knockout mutant of srtE1 and srtE2 shows a developmental defect in aerial hyphae formation more dramatic than that due to chaplin deletion. In Streptomyces coelicolor (strain ATCC BAA-471 / A3(2) / M145), this protein is Sortase SrtE2.